Consider the following 509-residue polypeptide: Cytochrome P450 monooxygenase AFT11-1 (509 aa).

Cys432 lines the heme pocket.

Belongs to the cytochrome P450 family. Heme serves as cofactor.

Its pathway is mycotoxin biosynthesis. Functionally, cytochrome P450 monooxygenase; part of the gene clusters that mediate the biosynthesis of the host-selective toxins (HSTs) AF-toxins responsible for Alternaria black spot of strawberry disease by the strawberry pathotype. AF-toxin I and III are valine derivatives of 2,3-dyhydroxy-isovaleric acid and 2-hydroxy-isovaleric acid respectively, while AF II is an isoleucine derivative of 2-hydroxy-valeric acid. These derivatives are bound to a 9,10-epoxy-8-hydroxy-9-methyl-decatrienoic acid (EDA) moiety. On cellular level, AF-toxins affect plasma membrane of susceptible cells and cause a sudden increase in loss of K(+) after a few minutes of toxin treatment. The aldo-keto reductase AFTS1 catalyzes the conversion of 2-keto-isovaleric acid (2-KIV) to 2-hydroxy-isovaleric acid (2-HIV) by reduction of its ketone to an alcohol. The acyl-CoA ligase AFT1, the hydrolase AFT2 and the enoyl-CoA hydratases AFT3 and AFT6, but also the polyketide synthase AFT9, the acyl-CoA dehydrogenase AFT10, the cytochrome P450 monooxygenase AFT11 and the oxidoreductase AFT12 are all involved in the biosynthesis of the AK-, AF- and ACT-toxin common EDA structural moiety. The exact function of each enzyme, and of additional enzymes identified within the AF-toxin clusters have still to be determined. The sequence is that of Cytochrome P450 monooxygenase AFT11-1 from Alternaria alternata (Alternaria rot fungus).